A 336-amino-acid polypeptide reads, in one-letter code: Fructose-1,6-bisphosphatase class 1 (336 aa).

Mg(2+) contacts are provided by glutamate 90, aspartate 112, leucine 114, and aspartate 115. Residues aspartate 115 to serine 118, asparagine 211, and lysine 277 each bind substrate. Glutamate 283 serves as a coordination point for Mg(2+).

Belongs to the FBPase class 1 family. In terms of assembly, homotetramer. The cofactor is Mg(2+).

The protein localises to the cytoplasm. It carries out the reaction beta-D-fructose 1,6-bisphosphate + H2O = beta-D-fructose 6-phosphate + phosphate. Its pathway is carbohydrate biosynthesis; gluconeogenesis. The protein is Fructose-1,6-bisphosphatase class 1 of Pseudomonas putida (strain W619).